We begin with the raw amino-acid sequence, 450 residues long: Probable glycosidase CRR1 (450 aa).

The N-terminal stretch at 1–17 (MSKRIIQLILLSAFARA) is a signal peptide. Residues 67 to 347 (SPESCVPVPA…WENAPDIKAH (281 aa)) form the GH16 domain. Catalysis depends on E225, which acts as the Nucleophile. Catalysis depends on E229, which acts as the Proton donor. The segment at 428-450 (AQRQQHHRRSLPHVEAPPITNTM) is disordered.

It belongs to the glycosyl hydrolase 16 family. CRR1 subfamily.

Its subcellular location is the spore wall. Its function is as follows. Spore specific glycosidase involved in spore wall assembly during sporulation. May be involved in copper import. The protein is Probable glycosidase CRR1 (CRR1) of Eremothecium gossypii (strain ATCC 10895 / CBS 109.51 / FGSC 9923 / NRRL Y-1056) (Yeast).